Reading from the N-terminus, the 472-residue chain is Eukaryotic translation initiation factor 2 subunit 3, Y-linked (472 aa).

Position 2 is an N-acetylalanine (alanine 2). The residue at position 16 (serine 16) is a Phosphoserine. The 209-residue stretch at 39–247 (QATINIGTIG…YIVKKIPVPL (209 aa)) folds into the tr-type G domain. Positions 48-55 (GHVAHGKS) are G1. GTP is bound at residue 51-56 (AHGKST). Residues 76-80 (NITIK) are G2. The interval 134 to 137 (DCPG) is G3. GTP-binding positions include 190–193 (NKID) and 225–227 (SAQ). The segment at 190–193 (NKID) is G4. Positions 225–227 (SAQ) are G5.

Belongs to the TRAFAC class translation factor GTPase superfamily. Classic translation factor GTPase family. EIF2G subfamily. EIF2 is a heterotrimer composed of an alpha (EIF2S1), a beta (EIF2S2) and a gamma (Eif2s3x and Eif2s3y) chain. eIF2 is member of the 43S pre-initiation complex (43S PIC). Widely expressed in males.

The catalysed reaction is GTP + H2O = GDP + phosphate + H(+). Its function is as follows. Member of the eIF2 complex that functions in the early steps of protein synthesis by forming a ternary complex with GTP and initiator tRNA. This complex binds to a 40S ribosomal subunit, followed by mRNA binding to form the 43S pre-initiation complex (43S PIC). Junction of the 60S ribosomal subunit to form the 80S initiation complex is preceded by hydrolysis of the GTP bound to eIF2 and release of an eIF2-GDP binary complex. In order for eIF2 to recycle and catalyze another round of initiation, the GDP bound to eIF2 must exchange with GTP by way of a reaction catalyzed by eIF-2B. Along with its paralog on chromosome X, may contribute to spermatogenesis up to the round spermatid stage. This is Eukaryotic translation initiation factor 2 subunit 3, Y-linked (Eif2s3y) from Rattus norvegicus (Rat).